Here is a 728-residue protein sequence, read N- to C-terminus: Lutropin-choriogonadotropic hormone receptor (728 aa).

The signal sequence occupies residues 1 to 19; that stretch reads MLPALLPLLLPALLPGAGG. Residues 20–389 are Extracellular-facing; the sequence is GRCPQRCACT…DILGYSFLRV (370 aa). LRR repeat units follow at residues 92–116, 117–142, 144–166, 168–191, 193–215, and 216–239; these read LPAL…AFRN, LPRL…IFSS, AHFI…AFQG, SNES…AFNG, KLNQ…ALRG, and ATGP…GLEA. The helical transmembrane segment at 390-410 threads the bilayer; sequence LIWFINILALAGNFIVLLVLI. Over 411 to 420 the chain is Cytoplasmic; it reads TSHYKLTVPR. A helical transmembrane segment spans residues 421 to 441; sequence FLMCNLSFADFCMGLYLLLIA. At 442 to 466 the chain is on the extracellular side; it reads SVDAQTSGQYYNHAIDWQTGSGCST. The cysteines at positions 464 and 539 are disulfide-linked. Residues 467–487 form a helical membrane-spanning segment; it reads AGFFTVFASELSVYTLTVITI. The Cytoplasmic segment spans residues 488 to 507; the sequence is ERWHTITYAMQLDRKLRLRH. Residues 508-528 traverse the membrane as a helical segment; it reads AVPIMLGGWVFSILIAVLPLL. Topologically, residues 529–551 are extracellular; the sequence is GVSSYMKVSICLPMDIETGLSQA. The helical transmembrane segment at 552–572 threads the bilayer; it reads YILLILMLNVIAFLVICACYI. Residues 573–595 are Cytoplasmic-facing; sequence KIYVAVQNPELVAANKDTKIAKR. The chain crosses the membrane as a helical span at residues 596-616; it reads MAILIFTDFTCMAPISFFAIS. Topologically, residues 617 to 630 are extracellular; the sequence is AAIKVPLITVTNSK. A helical membrane pass occupies residues 631-651; that stretch reads ILLVLFYPVNSCANPFLYAIF. Topologically, residues 652–728 are cytoplasmic; that stretch reads TKAFQRDFFL…STKKSQPECQ (77 aa).

The protein belongs to the G-protein coupled receptor 1 family. FSH/LSH/TSH subfamily. As to expression, expressed in ovarian follicle granulosa cells. Expressed in ovarian follicle theca cells.

It localises to the cell membrane. Its function is as follows. Receptor for lutropin-choriogonadotropic hormone. The activity of this receptor is mediated by G proteins which activate adenylate cyclase. The protein is Lutropin-choriogonadotropic hormone receptor of Gallus gallus (Chicken).